The primary structure comprises 114 residues: Turripeptide OL22 (114 aa).

In terms of processing, contains 6 disulfide bonds. As to expression, expressed by the venom duct.

It localises to the secreted. In terms of biological role, acts as a neurotoxin by inhibiting an ion channel. The protein is Turripeptide OL22 of Iotyrris olangoensis (Sea snail).